A 268-amino-acid chain; its full sequence is 4-hydroxy-tetrahydrodipicolinate reductase (268 aa).

Residues 7–12 (GAGGRM) and glutamate 33 contribute to the NAD(+) site. Arginine 34 serves as a coordination point for NADP(+). Residues 97 to 99 (GTT) and 121 to 124 (SGNM) each bind NAD(+). The Proton donor/acceptor role is filled by histidine 155. Histidine 156 contacts (S)-2,3,4,5-tetrahydrodipicolinate. Lysine 159 (proton donor) is an active-site residue. 165 to 166 (GT) is a binding site for (S)-2,3,4,5-tetrahydrodipicolinate.

This sequence belongs to the DapB family.

The protein resides in the cytoplasm. The enzyme catalyses (S)-2,3,4,5-tetrahydrodipicolinate + NAD(+) + H2O = (2S,4S)-4-hydroxy-2,3,4,5-tetrahydrodipicolinate + NADH + H(+). It catalyses the reaction (S)-2,3,4,5-tetrahydrodipicolinate + NADP(+) + H2O = (2S,4S)-4-hydroxy-2,3,4,5-tetrahydrodipicolinate + NADPH + H(+). Its pathway is amino-acid biosynthesis; L-lysine biosynthesis via DAP pathway; (S)-tetrahydrodipicolinate from L-aspartate: step 4/4. In terms of biological role, catalyzes the conversion of 4-hydroxy-tetrahydrodipicolinate (HTPA) to tetrahydrodipicolinate. The chain is 4-hydroxy-tetrahydrodipicolinate reductase from Brucella melitensis biotype 1 (strain ATCC 23456 / CCUG 17765 / NCTC 10094 / 16M).